The following is a 142-amino-acid chain: MGNGINAGRKLLENRKKFRWSDRDYKRRVLQLKRKSDPLEGAPQAKGIAIEKVGIEAKQPNSAIRKCVKVQLIKNGRQITAFAVGDGAINYIDEHDEVTVEGIGGRMGRSKGDIPGVRYKVVAVNGISLKELVKGRKEKTVR.

It belongs to the universal ribosomal protein uS12 family. As to quaternary structure, part of the 30S ribosomal subunit.

Its function is as follows. With S4 and S5 plays an important role in translational accuracy. Located at the interface of the 30S and 50S subunits. This Thermoplasma acidophilum (strain ATCC 25905 / DSM 1728 / JCM 9062 / NBRC 15155 / AMRC-C165) protein is Small ribosomal subunit protein uS12.